The primary structure comprises 260 residues: Hemin import ATP-binding protein HmuV (260 aa).

Residues 2 to 239 (IRAENITLIR…ETIARVYGIG (238 aa)) form the ABC transporter domain. 34 to 41 (GPNGAGKS) is an ATP binding site.

The protein belongs to the ABC transporter superfamily. Heme (hemin) importer (TC 3.A.1.14.5) family. The complex is composed of two ATP-binding proteins (HmuV), two transmembrane proteins (HmuU) and a solute-binding protein (HmuT).

The protein localises to the cell inner membrane. Functionally, part of the ABC transporter complex HmuTUV involved in hemin import. Responsible for energy coupling to the transport system. The chain is Hemin import ATP-binding protein HmuV from Agrobacterium fabrum (strain C58 / ATCC 33970) (Agrobacterium tumefaciens (strain C58)).